The primary structure comprises 936 residues: Isoleucine--tRNA ligase (936 aa).

Positions 58–68 (PYANGRAHLGT) match the 'HIGH' region motif. E561 contacts L-isoleucyl-5'-AMP. Residues 602–606 (KMSKS) carry the 'KMSKS' region motif. K605 lines the ATP pocket. Residues C899, C902, C919, and C922 each contribute to the Zn(2+) site.

The protein belongs to the class-I aminoacyl-tRNA synthetase family. IleS type 1 subfamily. As to quaternary structure, monomer. Zn(2+) serves as cofactor.

It localises to the cytoplasm. The catalysed reaction is tRNA(Ile) + L-isoleucine + ATP = L-isoleucyl-tRNA(Ile) + AMP + diphosphate. In terms of biological role, catalyzes the attachment of isoleucine to tRNA(Ile). As IleRS can inadvertently accommodate and process structurally similar amino acids such as valine, to avoid such errors it has two additional distinct tRNA(Ile)-dependent editing activities. One activity is designated as 'pretransfer' editing and involves the hydrolysis of activated Val-AMP. The other activity is designated 'posttransfer' editing and involves deacylation of mischarged Val-tRNA(Ile). This chain is Isoleucine--tRNA ligase, found in Coxiella burnetii (strain CbuG_Q212) (Coxiella burnetii (strain Q212)).